The sequence spans 298 residues: Mitochondrial glycine transporter (298 aa).

Solcar repeat units lie at residues 5 to 84, 105 to 189, and 211 to 295; these read TKTR…MRTA, LTTY…AKEV, and TSTL…LIKL. The next 6 membrane-spanning stretches (helical) occupy residues 11 to 36, 59 to 85, 111 to 136, 164 to 187, 215 to 241, and 270 to 288; these read LIGG…TRIQ, GTLP…RTAI, LISG…VRYE, GFGP…EKAK, VNST…KTRM, and GLSM…AWGI.

The protein belongs to the mitochondrial carrier (TC 2.A.29) family. SLC25A38 subfamily.

Its subcellular location is the mitochondrion inner membrane. It catalyses the reaction glycine(in) = glycine(out). Mitochondrial glycine transporter that imports glycine into the mitochondrial matrix. Plays an important role in providing glycine for the first enzymatic step in heme biosynthesis, the condensation of glycine with succinyl-CoA to produce 5-aminolevulinate (ALA) in the mitochondrial matrix. This Vanderwaltozyma polyspora (strain ATCC 22028 / DSM 70294 / BCRC 21397 / CBS 2163 / NBRC 10782 / NRRL Y-8283 / UCD 57-17) (Kluyveromyces polysporus) protein is Mitochondrial glycine transporter.